The chain runs to 454 residues: tRNA modification GTPase MnmE (454 aa).

(6S)-5-formyl-5,6,7,8-tetrahydrofolate contacts are provided by Arg-23, Glu-80, and Lys-120. One can recognise a TrmE-type G domain in the interval 216-377; the sequence is GMKVVIAGRP…LRNHLKQSMG (162 aa). Asn-226 contacts K(+). GTP contacts are provided by residues 226–231, 245–251, 270–273, 335–338, and 358–360; these read NAGKSS, TDIAGTT, DTAG, NKAD, and SAR. Mg(2+) is bound at residue Ser-230. Residues Thr-245, Ile-247, and Thr-250 each coordinate K(+). Residue Thr-251 participates in Mg(2+) binding. Lys-454 contributes to the (6S)-5-formyl-5,6,7,8-tetrahydrofolate binding site.

The protein belongs to the TRAFAC class TrmE-Era-EngA-EngB-Septin-like GTPase superfamily. TrmE GTPase family. In terms of assembly, homodimer. Heterotetramer of two MnmE and two MnmG subunits. It depends on K(+) as a cofactor.

It localises to the cytoplasm. Its function is as follows. Exhibits a very high intrinsic GTPase hydrolysis rate. Involved in the addition of a carboxymethylaminomethyl (cmnm) group at the wobble position (U34) of certain tRNAs, forming tRNA-cmnm(5)s(2)U34. In Escherichia coli O139:H28 (strain E24377A / ETEC), this protein is tRNA modification GTPase MnmE.